The sequence spans 232 residues: 5'-methylthioadenosine/S-adenosylhomocysteine nucleosidase (232 aa).

Residue Glu12 is the Proton acceptor of the active site. Residues Gly78, Ile152, and 173–174 (ME) contribute to the substrate site. The Proton donor role is filled by Asp197.

It belongs to the PNP/UDP phosphorylase family. MtnN subfamily. As to quaternary structure, homodimer.

It carries out the reaction S-adenosyl-L-homocysteine + H2O = S-(5-deoxy-D-ribos-5-yl)-L-homocysteine + adenine. The enzyme catalyses S-methyl-5'-thioadenosine + H2O = 5-(methylsulfanyl)-D-ribose + adenine. It catalyses the reaction 5'-deoxyadenosine + H2O = 5-deoxy-D-ribose + adenine. The protein operates within amino-acid biosynthesis; L-methionine biosynthesis via salvage pathway; S-methyl-5-thio-alpha-D-ribose 1-phosphate from S-methyl-5'-thioadenosine (hydrolase route): step 1/2. In terms of biological role, catalyzes the irreversible cleavage of the glycosidic bond in both 5'-methylthioadenosine (MTA) and S-adenosylhomocysteine (SAH/AdoHcy) to adenine and the corresponding thioribose, 5'-methylthioribose and S-ribosylhomocysteine, respectively. Also cleaves 5'-deoxyadenosine, a toxic by-product of radical S-adenosylmethionine (SAM) enzymes, into 5-deoxyribose and adenine. Thus, is required for in vivo function of the radical SAM enzymes biotin synthase and lipoic acid synthase, that are inhibited by 5'-deoxyadenosine accumulation. The polypeptide is 5'-methylthioadenosine/S-adenosylhomocysteine nucleosidase (Shigella boydii serotype 4 (strain Sb227)).